A 394-amino-acid polypeptide reads, in one-letter code: Na(+)/H(+) antiporter NhaA (394 aa).

11 helical membrane passes run 14–34 (AGGL…NSAL), 59–79 (LLLW…GLEV), 95–115 (VFPA…YLLF), 125–145 (GWAI…ALLG), 154–174 (VFLL…IALF), 179–199 (VSLQ…YMNW), 213–233 (LVLW…GVIV), 254–274 (GLHP…NAGV), 292–312 (IATG…WLAV), 328–348 (IFAV…IASL), and 363–383 (LGIL…LRLV).

It belongs to the NhaA Na(+)/H(+) (TC 2.A.33) antiporter family.

It localises to the cell inner membrane. The enzyme catalyses Na(+)(in) + 2 H(+)(out) = Na(+)(out) + 2 H(+)(in). Its function is as follows. Na(+)/H(+) antiporter that extrudes sodium in exchange for external protons. The sequence is that of Na(+)/H(+) antiporter NhaA from Yersinia pestis bv. Antiqua (strain Angola).